The following is a 124-amino-acid chain: Small ribosomal subunit protein uS13 (124 aa).

The interval 95–124 (GLPVRGQRTHTNARTRKGPRRSVMGKRKKA) is disordered.

It belongs to the universal ribosomal protein uS13 family. Part of the 30S ribosomal subunit. Forms a loose heterodimer with protein S19. Forms two bridges to the 50S subunit in the 70S ribosome.

Functionally, located at the top of the head of the 30S subunit, it contacts several helices of the 16S rRNA. In the 70S ribosome it contacts the 23S rRNA (bridge B1a) and protein L5 of the 50S subunit (bridge B1b), connecting the 2 subunits; these bridges are implicated in subunit movement. Contacts the tRNAs in the A and P-sites. The sequence is that of Small ribosomal subunit protein uS13 from Syntrophobacter fumaroxidans (strain DSM 10017 / MPOB).